The sequence spans 365 residues: UDP-N-acetylglucosamine--N-acetylmuramyl-(pentapeptide) pyrophosphoryl-undecaprenol N-acetylglucosamine transferase (365 aa).

UDP-N-acetyl-alpha-D-glucosamine-binding positions include 17 to 19 (TGG), asparagine 129, arginine 167, serine 194, isoleucine 250, 269 to 274 (ALTVSE), and glutamine 295.

The protein belongs to the glycosyltransferase 28 family. MurG subfamily.

Its subcellular location is the cell inner membrane. It carries out the reaction di-trans,octa-cis-undecaprenyl diphospho-N-acetyl-alpha-D-muramoyl-L-alanyl-D-glutamyl-meso-2,6-diaminopimeloyl-D-alanyl-D-alanine + UDP-N-acetyl-alpha-D-glucosamine = di-trans,octa-cis-undecaprenyl diphospho-[N-acetyl-alpha-D-glucosaminyl-(1-&gt;4)]-N-acetyl-alpha-D-muramoyl-L-alanyl-D-glutamyl-meso-2,6-diaminopimeloyl-D-alanyl-D-alanine + UDP + H(+). The protein operates within cell wall biogenesis; peptidoglycan biosynthesis. Its function is as follows. Cell wall formation. Catalyzes the transfer of a GlcNAc subunit on undecaprenyl-pyrophosphoryl-MurNAc-pentapeptide (lipid intermediate I) to form undecaprenyl-pyrophosphoryl-MurNAc-(pentapeptide)GlcNAc (lipid intermediate II). In Shewanella pealeana (strain ATCC 700345 / ANG-SQ1), this protein is UDP-N-acetylglucosamine--N-acetylmuramyl-(pentapeptide) pyrophosphoryl-undecaprenol N-acetylglucosamine transferase.